A 349-amino-acid polypeptide reads, in one-letter code: Protein FAM98C (349 aa).

Residues 313–349 form a disordered region; sequence PDRGGRPNELEPPMPTWRSRREDGGPQCWGRKKKKKK.

The protein belongs to the FAM98 family.

The sequence is that of Protein FAM98C (FAM98C) from Homo sapiens (Human).